The primary structure comprises 375 residues: Succinyl-diaminopimelate desuccinylase (375 aa).

His66 is a Zn(2+) binding site. Asp68 is a catalytic residue. Asp99 contacts Zn(2+). Residue Glu133 is the Proton acceptor of the active site. Glu134, Glu162, and His348 together coordinate Zn(2+).

The protein belongs to the peptidase M20A family. DapE subfamily. As to quaternary structure, homodimer. Zn(2+) serves as cofactor. The cofactor is Co(2+).

The catalysed reaction is N-succinyl-(2S,6S)-2,6-diaminopimelate + H2O = (2S,6S)-2,6-diaminopimelate + succinate. Its pathway is amino-acid biosynthesis; L-lysine biosynthesis via DAP pathway; LL-2,6-diaminopimelate from (S)-tetrahydrodipicolinate (succinylase route): step 3/3. Its function is as follows. Catalyzes the hydrolysis of N-succinyl-L,L-diaminopimelic acid (SDAP), forming succinate and LL-2,6-diaminopimelate (DAP), an intermediate involved in the bacterial biosynthesis of lysine and meso-diaminopimelic acid, an essential component of bacterial cell walls. The polypeptide is Succinyl-diaminopimelate desuccinylase (Methylobacillus flagellatus (strain ATCC 51484 / DSM 6875 / VKM B-1610 / KT)).